Here is a 178-residue protein sequence, read N- to C-terminus: Interleukin-10 (178 aa).

Residues 1-18 (MHSSALLCCLVLLTGVRA) form the signal peptide. 2 disulfide bridges follow: Cys30–Cys126 and Cys80–Cys132. The N-linked (GlcNAc...) asparagine glycan is linked to Asn134.

This sequence belongs to the IL-10 family. In terms of assembly, homodimer. Interacts with IL10RA and IL10RB.

It localises to the secreted. In terms of biological role, major immune regulatory cytokine that acts on many cells of the immune system where it has profound anti-inflammatory functions, limiting excessive tissue disruption caused by inflammation. Mechanistically, IL10 binds to its heterotetrameric receptor comprising IL10RA and IL10RB leading to JAK1 and STAT2-mediated phosphorylation of STAT3. In turn, STAT3 translocates to the nucleus where it drives expression of anti-inflammatory mediators. Targets antigen-presenting cells (APCs) such as macrophages and monocytes and inhibits their release of pro-inflammatory cytokines including granulocyte-macrophage colony-stimulating factor /GM-CSF, granulocyte colony-stimulating factor/G-CSF, IL-1 alpha, IL-1 beta, IL-6, IL-8 and TNF-alpha. Also interferes with antigen presentation by reducing the expression of MHC-class II and co-stimulatory molecules, thereby inhibiting their ability to induce T cell activation. In addition, controls the inflammatory response of macrophages by reprogramming essential metabolic pathways including mTOR signaling. The sequence is that of Interleukin-10 (IL10) from Macaca nemestrina (Pig-tailed macaque).